Here is a 591-residue protein sequence, read N- to C-terminus: MFGKRKKRVEISAPSNFEHRVHTGFDQHEQKFTGLPRQWQSLIEESARRPKPLVDPACITSIQPGAPKTIVRGSKGAKDGALTLLLDEFENMSVTRSNSLRRDSPPPPARARQENGMPEEPATTARGGPGKAGSRGRFAGHSEAGGGSGDRRRAGPEKRPKSSREGSGGPQESSRDKRPLSGPDVGTPQPAGLASGAKLAAGRPFNTYPRADTDHPSRGAQGEPHDVAPNGPSAGGLAIPQSSSSSSRPPTRARGAPSPGVLGPHASEPQLAPPACTPAAPAVPGPPGPRSPQREPQRVSHEQFRAALQLVVDPGDPRSYLDNFIKIGEGSTGIVCIATVRSSGKLVAVKKMDLRKQQRRELLFNEVVIMRDYQHENVVEMYNSYLVGDELWVVMEFLEGGALTDIVTHTRMNEEQIAAVCLAVLQALSVLHAQGVIHRDIKSDSILLTHDGRVKLSDFGFCAQVSKEVPRRKSLVGTPYWMAPELISRLPYGPEVDIWSLGIMVIEMVDGEPPYFNEPPLKAMKMIRDNLPPRLKNLHKVSPSLKGFLDRLLVRDPAQRATAAELLKHPFLAKAGPPASIVPLMRQNRTR.

Residues 11–24 (ISAPSNFEHRVHTG) form the CRIB domain. The linker stretch occupies residues 25–320 (FDQHEQKFTG…VVDPGDPRSY (296 aa)). Serine 41 is modified (phosphoserine). N6-methyllysine is present on lysine 78. The tract at residues 95–301 (TRSNSLRRDS…PQREPQRVSH (207 aa)) is disordered. Phosphoserine is present on residues serine 104 and serine 148. Basic and acidic residues predominate over residues 149–164 (GDRRRAGPEKRPKSSR). Phosphoserine occurs at positions 167 and 181. A Phosphothreonine modification is found at threonine 187. The span at 191–202 (AGLASGAKLAAG) shows a compositional bias: low complexity. Residue serine 195 is modified to Phosphoserine. Threonine 207 carries the post-translational modification Phosphothreonine. Residues 242-260 (SSSSSSRPPTRARGAPSPG) show a composition bias toward low complexity. Phosphoserine occurs at positions 258 and 267. A compositionally biased stretch (pro residues) spans 271–290 (LAPPACTPAAPAVPGPPGPR). Serine 291 is subject to Phosphoserine. Positions 292-301 (PQREPQRVSH) are enriched in basic and acidic residues. The tract at residues 298 to 323 (RVSHEQFRAALQLVVDPGDPRSYLDN) is GEF-interaction domain (GID). The Protein kinase domain maps to 321–572 (LDNFIKIGEG…AAELLKHPFL (252 aa)). ATP contacts are provided by residues 327-335 (IGEGSTGIV), lysine 350, and 396-398 (EFL). Aspartate 440 serves as the catalytic Proton acceptor. An ATP-binding site is contributed by 458–460 (DFG). Serine 474 carries the phosphoserine; by autocatalysis modification.

It belongs to the protein kinase superfamily. STE Ser/Thr protein kinase family. STE20 subfamily. Interacts with FGFR2 and GRB2. Interacts tightly with GTP-bound but not GDP-bound CDC42/p21 and weakly with RAC1. Interacts with INKA1. Interacts with SH3RF2. Interacts with RHOU and PAXI; the PAK4-RHOU complex protects RHOU from ubiquitination and acts as a scaffold to suppport paxillin/PAXI phosphorylation. In terms of processing, autophosphorylated on serine residues when activated by CDC42/p21. Phosphorylated on tyrosine residues upon stimulation of FGFR2. Methylated by SETD6. Polyubiquitinated, leading to its proteasomal degradation. Highest expression in prostate, testis and colon.

It localises to the cytoplasm. It carries out the reaction L-seryl-[protein] + ATP = O-phospho-L-seryl-[protein] + ADP + H(+). The enzyme catalyses L-threonyl-[protein] + ATP = O-phospho-L-threonyl-[protein] + ADP + H(+). With respect to regulation, inhibited by INKA1; which inhibits the serine/threonine-protein kinase activity by binding PAK4 in a substrate-like manner. Serine/threonine-protein kinase that plays a role in a variety of different signaling pathways including cytoskeleton regulation, cell adhesion turnover, cell migration, growth, proliferation or cell survival. Activation by various effectors including growth factor receptors or active CDC42 and RAC1 results in a conformational change and a subsequent autophosphorylation on several serine and/or threonine residues. Phosphorylates and inactivates the protein phosphatase SSH1, leading to increased inhibitory phosphorylation of the actin binding/depolymerizing factor cofilin. Decreased cofilin activity may lead to stabilization of actin filaments. Phosphorylates LIMK1, a kinase that also inhibits the activity of cofilin. Phosphorylates integrin beta5/ITGB5 and thus regulates cell motility. Phosphorylates ARHGEF2 and activates the downstream target RHOA that plays a role in the regulation of assembly of focal adhesions and actin stress fibers. Stimulates cell survival by phosphorylating the BCL2 antagonist of cell death BAD. Alternatively, inhibits apoptosis by preventing caspase-8 binding to death domain receptors in a kinase independent manner. Plays a role in cell-cycle progression by controlling levels of the cell-cycle regulatory protein CDKN1A and by phosphorylating RAN. Promotes kinase-independent stabilization of RHOU, thereby contributing to focal adhesion disassembly during cell migration. The polypeptide is Serine/threonine-protein kinase PAK 4 (Homo sapiens (Human)).